We begin with the raw amino-acid sequence, 276 residues long: 3-methyl-2-oxobutanoate hydroxymethyltransferase (276 aa).

Asp44 and Asp83 together coordinate Mg(2+). 3-methyl-2-oxobutanoate-binding positions include 44-45 (DS), Asp83, and Lys113. Glu115 lines the Mg(2+) pocket. Glu182 serves as the catalytic Proton acceptor.

It belongs to the PanB family. Homodecamer; pentamer of dimers. The cofactor is Mg(2+).

The protein localises to the cytoplasm. The enzyme catalyses 3-methyl-2-oxobutanoate + (6R)-5,10-methylene-5,6,7,8-tetrahydrofolate + H2O = 2-dehydropantoate + (6S)-5,6,7,8-tetrahydrofolate. It participates in cofactor biosynthesis; (R)-pantothenate biosynthesis; (R)-pantoate from 3-methyl-2-oxobutanoate: step 1/2. Catalyzes the reversible reaction in which hydroxymethyl group from 5,10-methylenetetrahydrofolate is transferred onto alpha-ketoisovalerate to form ketopantoate. The protein is 3-methyl-2-oxobutanoate hydroxymethyltransferase of Clostridium acetobutylicum (strain ATCC 824 / DSM 792 / JCM 1419 / IAM 19013 / LMG 5710 / NBRC 13948 / NRRL B-527 / VKM B-1787 / 2291 / W).